The sequence spans 793 residues: Neurobeachin (793 aa).

2 disordered regions span residues 68 to 92 (ENIK…TGAK) and 685 to 793 (RETA…EILK). Composition is skewed to polar residues over residues 77-90 (NVST…QTTG), 689-710 (RSGS…STET), 750-762 (NILN…TSTG), and 782-793 (ESLTESPSEILK).

Belongs to the WD repeat neurobeachin family. Interacts with RII subunit of PKA. As to expression, forebrain and cerebellum.

The protein resides in the cytoplasm. It is found in the membrane. Binds to type II regulatory subunits of protein kinase A and anchors/targets them to the membrane. May anchor the kinase to cytoskeletal and/or organelle-associated proteins. The chain is Neurobeachin (NBEA) from Gallus gallus (Chicken).